A 318-amino-acid chain; its full sequence is Protein FAM228A (318 aa).

The disordered stretch occupies residues 259–297 (SQESKRHEKKGLALGTGQHRPRSWAAGEGQQRRRSQPVD).

It belongs to the FAM228 family.

This chain is Protein FAM228A (FAM228A), found in Bos taurus (Bovine).